Reading from the N-terminus, the 130-residue chain is Small ribosomal subunit protein uS8 (130 aa).

This sequence belongs to the universal ribosomal protein uS8 family. Part of the 30S ribosomal subunit. Contacts proteins S5 and S12.

Its function is as follows. One of the primary rRNA binding proteins, it binds directly to 16S rRNA central domain where it helps coordinate assembly of the platform of the 30S subunit. This is Small ribosomal subunit protein uS8 from Pseudomonas fluorescens (strain SBW25).